Consider the following 474-residue polypeptide: MWRVRKRGYFGIWSFPLIIAAVCAQSVNDPSNMSLVKETVDRLLKGYDIRLRPDFGGPPVAVGMNIDIASIDMVSEVNMDYTLTMYFQQAWRDKRLSYNVIPLNLTLDNRVADQLWVPDTYFLNDKKSFVHGVTVKNRMIRLHPDGTVLYGLRITTTAACMMDLRRYPLDEQNCTLEIESYGYTTDDIEFYWRGDDNAVTGVTKIELPQFSIVDYKLITKKVVFSTGSYPRLSLSFKLKRNIGYFILQTYMPSILITILSWVSFWINYDASAARVALGITTVLTMTTINTHLRETLPKIPYVKAIDMYLMGCFVFVFMALLEYALVNYIFFGRGPQRQKKAAEKAANANNEKMRLDVNKMDPHENILLSTLEIKNEMATSEAVMGLGDPRSTMLAYDASSIQYRKAGLPRHSFGRNALERHVAQKKSRLRRRASQLKITIPDLTDVNAIDRWSRIFFPVVFSFFNIVYWLYYVN.

Positions 1 to 25 (MWRVRKRGYFGIWSFPLIIAAVCAQ) are cleaved as a signal peptide. The Extracellular portion of the chain corresponds to 26 to 244 (SVNDPSNMSL…SFKLKRNIGY (219 aa)). 2 N-linked (GlcNAc...) asparagine glycosylation sites follow: N32 and N104. Position 121 (Y121) interacts with histamine. A disulfide bond links C160 and C174. N-linked (GlcNAc...) asparagine glycosylation is present at N173. Residues 180–181 (SY) and T226 contribute to the histamine site. 4-aminobutanoate is bound by residues Y181 and T226. Transmembrane regions (helical) follow at residues 245 to 266 (FILQTYMPSILITILSWVSFWI), 270 to 292 (ASAARVALGITTVLTMTTINTHL), and 304 to 326 (AIDMYLMGCFVFVFMALLEYALV). Over 327–451 (NYIFFGRGPQ…DLTDVNAIDR (125 aa)) the chain is Cytoplasmic. A Phosphotyrosine modification is found at Y403. The helical transmembrane segment at 452 to 473 (WSRIFFPVVFSFFNIVYWLYYV) threads the bilayer.

Belongs to the ligand-gated ion channel (TC 1.A.9) family. Gamma-aminobutyric acid receptor (TC 1.A.9.5) subfamily. GABRB2 sub-subfamily. In terms of assembly, heteropentamer, formed by a combination of alpha (GABRA1-6), beta (GABRB1-3), gamma (GABRG1-3), delta (GABRD), epsilon (GABRE), rho (GABRR1-3), pi (GABRP) and theta (GABRQ) chains, each subunit exhibiting distinct physiological and pharmacological properties. Interacts with UBQLN1. May interact with KIF21B. Identified in a complex of 720 kDa composed of LHFPL4, NLGN2, GABRA1, GABRB2, GABRG2 and GABRB3. Post-translationally, glycosylated. In terms of tissue distribution, expressed in brain (at protein level), in cerebellar granule cells. Expressed in lungs, in alveolar epithelium.

It localises to the postsynaptic cell membrane. The protein localises to the cell membrane. It is found in the cytoplasmic vesicle membrane. The enzyme catalyses chloride(in) = chloride(out). Allosterically activated by benzodiazepines and the anesthetic etomidate. Inhibited by the antagonist bicuculline. Potentiated by histamine. Its function is as follows. Beta subunit of the heteropentameric ligand-gated chloride channel gated by gamma-aminobutyric acid (GABA), a major inhibitory neurotransmitter in the brain. GABA-gated chloride channels, also named GABA(A) receptors (GABAAR), consist of five subunits arranged around a central pore and contain GABA active binding site(s) located at the alpha and beta subunit interface(s). When activated by GABA, GABAARs selectively allow the flow of chloride anions across the cell membrane down their electrochemical gradient. Chloride influx into the postsynaptic neuron following GABAAR opening decreases the neuron ability to generate a new action potential, thereby reducing nerve transmission. GABAARs containing alpha-1 and beta-2 or -3 subunits exhibit synaptogenic activity; the gamma-2 subunit being necessary but not sufficient to induce rapid synaptic contacts formation. Extrasynaptic beta-2 receptors contribute to the tonic GABAergic inhibition. Beta-containing GABAARs can simultaneously bind GABA and histamine where histamine binds at the interface of two neighboring beta subunits, which may be involved in the regulation of sleep and wakefulness. The chain is Gamma-aminobutyric acid receptor subunit beta-2 from Rattus norvegicus (Rat).